We begin with the raw amino-acid sequence, 307 residues long: Elongation factor Ts (307 aa).

The interval 80–83 (TDFV) is involved in Mg(2+) ion dislocation from EF-Tu.

This sequence belongs to the EF-Ts family.

Its subcellular location is the cytoplasm. Functionally, associates with the EF-Tu.GDP complex and induces the exchange of GDP to GTP. It remains bound to the aminoacyl-tRNA.EF-Tu.GTP complex up to the GTP hydrolysis stage on the ribosome. This chain is Elongation factor Ts, found in Rhizorhabdus wittichii (strain DSM 6014 / CCUG 31198 / JCM 15750 / NBRC 105917 / EY 4224 / RW1) (Sphingomonas wittichii).